Reading from the N-terminus, the 183-residue chain is TATA-box-binding protein (183 aa).

Tandem repeats lie at residues 8–84 (VENI…VDKI) and 99–175 (IQNI…KERL).

It belongs to the TBP family.

General factor that plays a role in the activation of archaeal genes transcribed by RNA polymerase. Binds specifically to the TATA box promoter element which lies close to the position of transcription initiation. The sequence is that of TATA-box-binding protein from Methanosphaera stadtmanae (strain ATCC 43021 / DSM 3091 / JCM 11832 / MCB-3).